A 142-amino-acid chain; its full sequence is MAKKVQAYVKLQVAAGMANPSPPVGPALGQQGVNIMEFCKAFNARTESLEKGLPIPVVITVYADRSFTFVTKTPPAAVLLKKALGLKSGSSKPNKDKVGTVTQAQLRQIAETKAADMTGATIETKMKSIAGTARSMGLIVEE.

This sequence belongs to the universal ribosomal protein uL11 family. Part of the ribosomal stalk of the 50S ribosomal subunit. Interacts with L10 and the large rRNA to form the base of the stalk. L10 forms an elongated spine to which L12 dimers bind in a sequential fashion forming a multimeric L10(L12)X complex. One or more lysine residues are methylated.

Its function is as follows. Forms part of the ribosomal stalk which helps the ribosome interact with GTP-bound translation factors. The sequence is that of Large ribosomal subunit protein uL11 from Glaesserella parasuis serovar 5 (strain SH0165) (Haemophilus parasuis).